The chain runs to 98 residues: Small ribosomal subunit protein bS6 (98 aa).

The protein belongs to the bacterial ribosomal protein bS6 family.

Its function is as follows. Binds together with bS18 to 16S ribosomal RNA. This Levilactobacillus brevis (strain ATCC 367 / BCRC 12310 / CIP 105137 / JCM 1170 / LMG 11437 / NCIMB 947 / NCTC 947) (Lactobacillus brevis) protein is Small ribosomal subunit protein bS6.